Here is a 253-residue protein sequence, read N- to C-terminus: 3-deoxy-manno-octulosonate cytidylyltransferase (253 aa).

This sequence belongs to the KdsB family.

It is found in the cytoplasm. It catalyses the reaction 3-deoxy-alpha-D-manno-oct-2-ulosonate + CTP = CMP-3-deoxy-beta-D-manno-octulosonate + diphosphate. It functions in the pathway nucleotide-sugar biosynthesis; CMP-3-deoxy-D-manno-octulosonate biosynthesis; CMP-3-deoxy-D-manno-octulosonate from 3-deoxy-D-manno-octulosonate and CTP: step 1/1. It participates in bacterial outer membrane biogenesis; lipopolysaccharide biosynthesis. Its function is as follows. Activates KDO (a required 8-carbon sugar) for incorporation into bacterial lipopolysaccharide in Gram-negative bacteria. The polypeptide is 3-deoxy-manno-octulosonate cytidylyltransferase (Aeromonas hydrophila subsp. hydrophila (strain ATCC 7966 / DSM 30187 / BCRC 13018 / CCUG 14551 / JCM 1027 / KCTC 2358 / NCIMB 9240 / NCTC 8049)).